A 246-amino-acid polypeptide reads, in one-letter code: Acetylglutamate kinase (246 aa).

Substrate contacts are provided by residues 30 to 31 (GG), Arg-52, and Asn-151.

It belongs to the acetylglutamate kinase family. ArgB subfamily.

Its subcellular location is the cytoplasm. It catalyses the reaction N-acetyl-L-glutamate + ATP = N-acetyl-L-glutamyl 5-phosphate + ADP. Its pathway is amino-acid biosynthesis; L-arginine biosynthesis; N(2)-acetyl-L-ornithine from L-glutamate: step 2/4. Functionally, catalyzes the ATP-dependent phosphorylation of N-acetyl-L-glutamate. This is Acetylglutamate kinase from Methanopyrus kandleri (strain AV19 / DSM 6324 / JCM 9639 / NBRC 100938).